The following is a 476-amino-acid chain: Transcription factor EB (476 aa).

Disordered regions lie at residues M1–P66 and H107–S142. The tract at residues M1–L167 is interaction with ACSS2. The span at Q26 to Q44 shows a compositional bias: low complexity. 4 positions are modified to phosphoserine: S109, S114, S122, and S138. Positions S132–S142 are enriched in low complexity. The Nuclear export signal signature appears at G136 to P153. S142 is subject to Phosphoserine; by MTOR. The tract at residues E156–M165 is strong transcription activation domain. Residue T183 is modified to Phosphothreonine. S211 is subject to Phosphoserine; by MTOR. An S-(2,3-dicarboxypropyl)cysteine modification is found at C212. The bHLH domain occupies Q235 to M288. The Nuclear localization signal motif lies at R245–R248. The leucine-zipper stretch occupies residues L298–L319. At S332 the chain carries Phosphoserine. Residues E349 to K430 are disordered. The span at P369–P390 shows a compositional bias: pro residues. S423, S441, S466, S467, and S469 each carry phosphoserine. Over residues S447–S469 the composition is skewed to low complexity. Residues S447 to L476 form a disordered region.

The protein belongs to the MiT/TFE family. Homodimer and heterodimer; with TFE3 or MITF. Interacts (when phosphorylated by MTOR) with YWHAZ; promoting retention in the cytosol. Interacts with IRGM; promoting association between TFEB and PPP3CB and dephosphorylation. Interacts with small GTPases Rag (RagA/RRAGA, RagB/RRAGB, RagC/RRAGC and/or RagD/RRAGD); promoting its recruitment to lysosomal membrane in the presence of nutrients. Interacts with ACSS2. Post-translationally, phosphorylation at Ser-211 by MTOR via non-canonical mTORC1 pathway regulates its subcellular location and activity. When nutrients are present, phosphorylation by MTOR promotes association with 14-3-3/YWHA adapters and retention in the cytosol. Inhibition of mTORC1, starvation and lysosomal disruption, promotes dephosphorylation by calcineurin PPP3CB and translocation to the nucleus. Dephosphorylated by calcineurin PPP3CB in response to lysosomal Ca(2+) release. IRGM promotes dephosphorylation by calcineurin PPP3CB, resulting in TFEB nuclear translocation and stimulation of lysosomal biogenesis. Dephosphorylated by phosphatase PPP3CA following Coxsackievirus B3 infection, leading to nuclear translocation. Exported from the nucleus in a mTORC1-dependent manner in response to nutrient availability. In terms of processing, alkylated via a non-enzymatic covalent modification. Itaconate, an anti-inflammatory metabolite generated in response to lipopolysaccharide, alkylates Cys-212, preventing association with 14-3-3/YWHA adapters, thereby promoting nuclear translocation and activity. Sumoylated; does not affect dimerization with MITF. Post-translationally, (Microbial infection) Cleavage by Coxsackievirus B3 protease 3C after site Gln-60. This non-phosphorylated cleavage product retains its ability to interact with TFEB, TFE3 or MITF and presents impaired transcriptional activity, resulting in disruption of lysosomal functions and increased viral infection.

It localises to the nucleus. It is found in the cytoplasm. The protein localises to the cytosol. Its subcellular location is the lysosome membrane. Inhibited by eltrombopag drug, which binds to the bHLH domain and disrupts DNA-binding. Functionally, transcription factor that acts as a master regulator of lysosomal biogenesis, autophagy, lysosomal exocytosis, lipid catabolism, energy metabolism and immune response. Specifically recognizes and binds E-box sequences (5'-CANNTG-3'); efficient DNA-binding requires dimerization with itself or with another MiT/TFE family member such as TFE3 or MITF. Involved in the cellular response to amino acid availability by acting downstream of MTOR: in the presence of nutrients, TFEB phosphorylation by MTOR promotes its cytosolic retention and subsequent inactivation. Upon starvation or lysosomal stress, inhibition of MTOR induces TFEB dephosphorylation, resulting in nuclear localization and transcription factor activity. Specifically recognizes and binds the CLEAR-box sequence (5'-GTCACGTGAC-3') present in the regulatory region of many lysosomal genes, leading to activate their expression, thereby playing a central role in expression of lysosomal genes. Regulates lysosomal positioning in response to nutrient deprivation by promoting the expression of PIP4P1. Acts as a positive regulator of autophagy by promoting expression of genes involved in autophagy. In association with TFE3, activates the expression of CD40L in T-cells, thereby playing a role in T-cell-dependent antibody responses in activated CD4(+) T-cells and thymus-dependent humoral immunity. Specifically recognizes the gamma-E3 box, a subset of E-boxes, present in the heavy-chain immunoglobulin enhancer. Plays a role in the signal transduction processes required for normal vascularization of the placenta. Involved in the immune response to infection by the bacteria S.aureus, S.typhimurium or S.enterica: infection promotes itaconate production, leading to alkylation, resulting in nuclear localization and transcription factor activity. Itaconate-mediated alkylation activates TFEB-dependent lysosomal biogenesis, facilitating the bacteria clearance during the antibacterial innate immune response. In association with ACSS2, promotes the expression of genes involved in lysosome biogenesis and both autophagy upon glucose deprivation. The chain is Transcription factor EB from Homo sapiens (Human).